The following is a 707-amino-acid chain: NAD(P)H-quinone oxidoreductase subunit 5, chloroplastic (707 aa).

A run of 15 helical transmembrane segments spans residues 9–29 (WIIP…LLLF), 40–60 (WAFP…DLSI), 89–109 (IDSL…FVLI), 125–145 (FAYM…SNLI), 147–167 (IYIF…FWFT), 184–204 (IGDF…GSFE), 219–239 (NEVH…GAVA), 258–278 (TPIS…FLVA), 280–300 (LLPL…IGII), 327–347 (LGYM…FHLI), 354–374 (ALLF…VGYS), 396–416 (IAFL…CFWS), 425–445 (WLYS…TAFY), 538–558 (LFPM…AIPL), and 592–612 (FLTN…TAFL).

Belongs to the complex I subunit 5 family. NDH is composed of at least 16 different subunits, 5 of which are encoded in the nucleus.

The protein resides in the plastid. It is found in the chloroplast thylakoid membrane. It carries out the reaction a plastoquinone + NADH + (n+1) H(+)(in) = a plastoquinol + NAD(+) + n H(+)(out). The catalysed reaction is a plastoquinone + NADPH + (n+1) H(+)(in) = a plastoquinol + NADP(+) + n H(+)(out). In terms of biological role, NDH shuttles electrons from NAD(P)H:plastoquinone, via FMN and iron-sulfur (Fe-S) centers, to quinones in the photosynthetic chain and possibly in a chloroplast respiratory chain. The immediate electron acceptor for the enzyme in this species is believed to be plastoquinone. Couples the redox reaction to proton translocation, and thus conserves the redox energy in a proton gradient. The sequence is that of NAD(P)H-quinone oxidoreductase subunit 5, chloroplastic (ndhF) from Malvaviscus arboreus (Turk's cap).